The following is a 308-amino-acid chain: Aspartate carbamoyltransferase catalytic subunit (308 aa).

Residues arginine 51 and threonine 52 each contribute to the carbamoyl phosphate site. Lysine 80 provides a ligand contact to L-aspartate. Residues arginine 101, histidine 129, and glutamine 132 each coordinate carbamoyl phosphate. Positions 162 and 224 each coordinate L-aspartate. Residues leucine 263 and proline 264 each contribute to the carbamoyl phosphate site.

It belongs to the aspartate/ornithine carbamoyltransferase superfamily. ATCase family. Heterododecamer (2C3:3R2) of six catalytic PyrB chains organized as two trimers (C3), and six regulatory PyrI chains organized as three dimers (R2).

The catalysed reaction is carbamoyl phosphate + L-aspartate = N-carbamoyl-L-aspartate + phosphate + H(+). It participates in pyrimidine metabolism; UMP biosynthesis via de novo pathway; (S)-dihydroorotate from bicarbonate: step 2/3. Its function is as follows. Catalyzes the condensation of carbamoyl phosphate and aspartate to form carbamoyl aspartate and inorganic phosphate, the committed step in the de novo pyrimidine nucleotide biosynthesis pathway. The protein is Aspartate carbamoyltransferase catalytic subunit of Bacteroides fragilis (strain ATCC 25285 / DSM 2151 / CCUG 4856 / JCM 11019 / LMG 10263 / NCTC 9343 / Onslow / VPI 2553 / EN-2).